Reading from the N-terminus, the 435-residue chain is Serine/threonine-protein kinase 40 (435 aa).

Positions 35-332 (FVLGPRLGNS…DVLEALSAII (298 aa)) constitute a Protein kinase domain. Residues 41-49 (LGNSPVPSI) and K66 each bind ATP. D197 serves as the catalytic Proton acceptor.

It belongs to the protein kinase superfamily. CAMK Ser/Thr protein kinase family.

It is found in the nucleus. It localises to the cytoplasm. It catalyses the reaction L-seryl-[protein] + ATP = O-phospho-L-seryl-[protein] + ADP + H(+). The catalysed reaction is L-threonyl-[protein] + ATP = O-phospho-L-threonyl-[protein] + ADP + H(+). In terms of biological role, may be a negative regulator of NF-kappa-B and p53-mediated gene transcription. This is Serine/threonine-protein kinase 40 (Stk40) from Mus musculus (Mouse).